Consider the following 363-residue polypeptide: MERKHNPNSWSDLPHDLLNLVFERLSFANFNRARSVCSSWYSASRQSVPKNQIHWLILFPEDNNNKNNSSCTLFNPDEKDKLYKTQHLDEEFAKSVCRATYGSWFLMVDPLFNLYILNLFTRERINLHPVELLWKDYELGVSSRNRMKSRGGNVRSPVFWIDEITKDYVVLWGLRDWCVFYSKKGDTSWNQIPQTPDCYRLRYKDHKLYFQGYFSSFKIFDLSGEIPQQTFDSLVFVDHCHFRRWVLYSTLVVTLTGKVLNVEKMMDCSFTVFEVCSSGRRIHSLGDESILLEQGITVLANDTNGFIRNSIYFNNDCENIEKHTYDMFIFNLETQKTEPLHTFDSSSFQFSRAHWFVPSFTLT.

Positions 7 to 58 constitute an F-box domain; sequence PNSWSDLPHDLLNLVFERLSFANFNRARSVCSSWYSASRQSVPKNQIHWLIL.

This chain is Putative F-box protein At4g22170, found in Arabidopsis thaliana (Mouse-ear cress).